Reading from the N-terminus, the 344-residue chain is Melanocyte-stimulating hormone receptor (344 aa).

The Extracellular portion of the chain corresponds to Met1–Glu37. Asn29 carries N-linked (GlcNAc...) asparagine glycosylation. A helical transmembrane segment spans residues Val38–Ile63. Residues Ala64–Ser72 lie on the Cytoplasmic side of the membrane. A helical transmembrane segment spans residues Met73–Leu93. Topologically, residues Glu94–Asn118 are extracellular. Residues Thr119–Val140 traverse the membrane as a helical segment. The Cytoplasmic portion of the chain corresponds to Asp141–Arg163. Residues Ala164–Tyr183 form a helical membrane-spanning segment. Topologically, residues Asp184–Cys191 are extracellular. A helical membrane pass occupies residues Leu192–Leu211. Topologically, residues Ala212 to Ala240 are cytoplasmic. A helical membrane pass occupies residues Ala241–Phe266. The Extracellular segment spans residues Cys267–Asn279. A helical membrane pass occupies residues Phe280–Phe300. Residues Arg301–Pro344 lie on the Cytoplasmic side of the membrane. Cys315 carries S-palmitoyl cysteine lipidation.

The protein belongs to the G-protein coupled receptor 1 family. Interacts with MGRN1, but does not undergo MGRN1-mediated ubiquitination; this interaction competes with GNAS-binding and thus inhibits agonist-induced cAMP production. Interacts with OPN3; the interaction results in a decrease in MC1R-mediated cAMP signaling and ultimately a decrease in melanin production in melanocytes.

It is found in the cell membrane. Its function is as follows. Receptor for MSH (alpha, beta and gamma) and ACTH. The activity of this receptor is mediated by G proteins which activate adenylate cyclase. Mediates melanogenesis, the production of eumelanin (black/brown) and phaeomelanin (red/yellow), via regulation of cAMP signaling in melanocytes. This is Melanocyte-stimulating hormone receptor (MC1R) from Callithrix jacchus (White-tufted-ear marmoset).